We begin with the raw amino-acid sequence, 1740 residues long: Vitamin B12-dependent ribonucleoside-diphosphate reductase (1740 aa).

Residues 4-96 (EKVMKRDGRI…LYRKKKAEIR (93 aa)) enclose the ATP-cone domain. Residues Thr-257, 272 to 273 (AC), and Gly-301 each bind substrate. A disulfide bridge links Cys-273 with Cys-1308. One can recognise a DOD-type homing endonuclease 1 domain in the interval 443 to 582 (LAGFIAGDGC…VTHYLNALGI (140 aa)). The active-site Proton acceptor is Asn-913. 913–914 (NP) serves as a coordination point for substrate. Residues 1063–1194 (VLGWFIGDGY…VQDLLLLFGI (132 aa)) enclose the DOD-type homing endonuclease 2 domain. Residue Cys-1297 is the Cysteine radical intermediate of the active site. Substrate is bound by residues 1297-1299 (CGE) and 1471-1475 (PTGSV). The active-site Proton acceptor is the Glu-1299.

The protein belongs to the ribonucleoside diphosphate reductase class-2 family. It depends on adenosylcob(III)alamin as a cofactor. Post-translationally, this protein undergoes a protein self splicing that involves a post-translational excision of the intervening region (intein) followed by peptide ligation.

It carries out the reaction a 2'-deoxyribonucleoside 5'-diphosphate + [thioredoxin]-disulfide + H2O = a ribonucleoside 5'-diphosphate + [thioredoxin]-dithiol. Its function is as follows. Provides the precursors necessary for DNA synthesis. Catalyzes the biosynthesis of deoxyribonucleotides from the corresponding ribonucleotides. The sequence is that of Vitamin B12-dependent ribonucleoside-diphosphate reductase (rnr) from Pyrococcus furiosus (strain ATCC 43587 / DSM 3638 / JCM 8422 / Vc1).